The sequence spans 590 residues: Negative elongation factor C/D (590 aa).

Residues 16–43 are disordered; sequence GSAAEWGDEADGGQQEDDSGEGEDDAEV. A compositionally biased stretch (acidic residues) spans 21-43; that stretch reads WGDEADGGQQEDDSGEGEDDAEV.

It belongs to the NELF-D family. In terms of assembly, the NELF complex is composed of NELFA, NELFB, NELFCD (isoform NELF-C or isoform NELF-D) and NELFE; NELFA and NELFCD form a stable subcomplex that binds primarily through NELFCD to the N-terminus of NELFB. Binds RNA which may help to stabilize the NELF complex on nucleic acid. In vitro, the NELFA:NELFCD subcomplex binds to ssDNA and ssRNA in a sequence- and structure-dependent manner. Interacts with ARAF. Interacts with PCF11. Interacts with KAT8. As to expression, widely expressed. Expressed in heart, brain, lung, placenta, liver, skeletal and cardiac muscle, adrenal, thyroid, kidney and pancreas.

The protein localises to the nucleus. Functionally, essential component of the NELF complex, a complex that negatively regulates the elongation of transcription by RNA polymerase II. The NELF complex, which acts via an association with the DSIF complex and causes transcriptional pausing, is counteracted by the P-TEFb kinase complex. In terms of biological role, (Microbial infection) The NELF complex is involved in HIV-1 latency possibly involving recruitment of PCF11 to paused RNA polymerase II. This is Negative elongation factor C/D (NELFCD) from Homo sapiens (Human).